A 100-amino-acid polypeptide reads, in one-letter code: Aspartyl/glutamyl-tRNA(Asn/Gln) amidotransferase subunit C (100 aa).

The protein belongs to the GatC family. In terms of assembly, heterotrimer of A, B and C subunits.

It carries out the reaction L-glutamyl-tRNA(Gln) + L-glutamine + ATP + H2O = L-glutaminyl-tRNA(Gln) + L-glutamate + ADP + phosphate + H(+). It catalyses the reaction L-aspartyl-tRNA(Asn) + L-glutamine + ATP + H2O = L-asparaginyl-tRNA(Asn) + L-glutamate + ADP + phosphate + 2 H(+). Functionally, allows the formation of correctly charged Asn-tRNA(Asn) or Gln-tRNA(Gln) through the transamidation of misacylated Asp-tRNA(Asn) or Glu-tRNA(Gln) in organisms which lack either or both of asparaginyl-tRNA or glutaminyl-tRNA synthetases. The reaction takes place in the presence of glutamine and ATP through an activated phospho-Asp-tRNA(Asn) or phospho-Glu-tRNA(Gln). This is Aspartyl/glutamyl-tRNA(Asn/Gln) amidotransferase subunit C from Staphylococcus aureus (strain Newman).